Here is a 198-residue protein sequence, read N- to C-terminus: Putative nitroreductase MJ1384 (198 aa).

This sequence belongs to the nitroreductase family. FMN is required as a cofactor.

This chain is Putative nitroreductase MJ1384, found in Methanocaldococcus jannaschii (strain ATCC 43067 / DSM 2661 / JAL-1 / JCM 10045 / NBRC 100440) (Methanococcus jannaschii).